A 576-amino-acid chain; its full sequence is Dihydroxy-acid dehydratase (576 aa).

A [2Fe-2S] cluster-binding site is contributed by Cys56. Asp88 contacts Mg(2+). A [2Fe-2S] cluster-binding site is contributed by Cys129. 2 residues coordinate Mg(2+): Asp130 and Lys131. At Lys131 the chain carries N6-carboxylysine. Residue Cys201 coordinates [2Fe-2S] cluster. Residue Glu453 coordinates Mg(2+). Ser479 acts as the Proton acceptor in catalysis.

The protein belongs to the IlvD/Edd family. In terms of assembly, homodimer. [2Fe-2S] cluster is required as a cofactor. Mg(2+) serves as cofactor.

The enzyme catalyses (2R)-2,3-dihydroxy-3-methylbutanoate = 3-methyl-2-oxobutanoate + H2O. The catalysed reaction is (2R,3R)-2,3-dihydroxy-3-methylpentanoate = (S)-3-methyl-2-oxopentanoate + H2O. It functions in the pathway amino-acid biosynthesis; L-isoleucine biosynthesis; L-isoleucine from 2-oxobutanoate: step 3/4. Its pathway is amino-acid biosynthesis; L-valine biosynthesis; L-valine from pyruvate: step 3/4. Functionally, functions in the biosynthesis of branched-chain amino acids. Catalyzes the dehydration of (2R,3R)-2,3-dihydroxy-3-methylpentanoate (2,3-dihydroxy-3-methylvalerate) into 2-oxo-3-methylpentanoate (2-oxo-3-methylvalerate) and of (2R)-2,3-dihydroxy-3-methylbutanoate (2,3-dihydroxyisovalerate) into 2-oxo-3-methylbutanoate (2-oxoisovalerate), the penultimate precursor to L-isoleucine and L-valine, respectively. This is Dihydroxy-acid dehydratase from Parvibaculum lavamentivorans (strain DS-1 / DSM 13023 / NCIMB 13966).